A 367-amino-acid polypeptide reads, in one-letter code: tRNA-specific 2-thiouridylase MnmA (367 aa).

Residues 13–20 and methionine 39 each bind ATP; that span reads GLSGGVDS. Residues 99-101 form an interaction with target base in tRNA region; that stretch reads NPD. The Nucleophile role is filled by cysteine 104. Cysteine 104 and cysteine 200 form a disulfide bridge. Glycine 128 provides a ligand contact to ATP. The interval 150–152 is interaction with tRNA; sequence KDQ. Catalysis depends on cysteine 200, which acts as the Cysteine persulfide intermediate. The segment at 307–308 is interaction with tRNA; it reads RY.

This sequence belongs to the MnmA/TRMU family.

It is found in the cytoplasm. The enzyme catalyses S-sulfanyl-L-cysteinyl-[protein] + uridine(34) in tRNA + AH2 + ATP = 2-thiouridine(34) in tRNA + L-cysteinyl-[protein] + A + AMP + diphosphate + H(+). Its function is as follows. Catalyzes the 2-thiolation of uridine at the wobble position (U34) of tRNA, leading to the formation of s(2)U34. The sequence is that of tRNA-specific 2-thiouridylase MnmA from Neisseria meningitidis serogroup C (strain 053442).